Reading from the N-terminus, the 692-residue chain is MVPGAWHSLLFTTSSASEKEENRSQRMQLGEQLLNSSTPNLPHTFYPLTGDPSSAVHSPSLEFSVGHKGQQHKKYSSGSSRGLQLDSPREAGSSSTMLSETGEGFSVAKTLPDNVRKGSPSAEEELNTAVPTSAPRYLDGSLQAASERYYLQPQGQQLQQTTTELGSPCSIFPYAPPQHSAVYPAGGAARYPPYGSMLPPAGFSPPVCPSRPQYSSGYQYSQAPGTMYSPYPPAGTGSGLSALGLPGGGAGVRAQVFLCNRPLWLKFHRHQTEMIITKQGRRMFPFLSFNITGLNPTAHYNVFVEVVLADPNHWRFQGGKWVTCGKADNNMQGNKVYVHPESPNTGAHWMRQEISFGKLKLTNNKGANNNSTQMIVLQSLHKYQPRLHIVEVSEDGVEDLNDSAKNQTFTFPENQFIAVTAYQNTDITQLKIDHNPFAKGFRDNYDSMYTASESDRLTPSPADSPRSHQIVPGTRYSVQPFFQDQFVNNLPPARYYSGERTVPQANGLLSPQTNEEVANVPPQRWFVTPVQQAAANKLDMGAYETDYSSGSLLTYGIKSLPIQTSHPMAYYPDAAFASMAGWGSRGSTYQRKMTTSLPWSSRSSPSGFSEDLLPKDKVKEEMSSSWVETPPSIKSLDSNDSGVYTGACKRRRLSPSTSSNENSPPIKCEDIGTEDYKDATKGLGYYSFYSSS.

The tract at residues 35-135 (NSSTPNLPHT…LNTAVPTSAP (101 aa)) is disordered. The T-box DNA-binding region spans 263–443 (LWLKFHRHQT…HNPFAKGFRD (181 aa)). Residues 578 to 692 (SMAGWGSRGS…LGYYSFYSSS (115 aa)) are required for transcription activation. Disordered regions lie at residues 595 to 614 (TSLPWSSRSSPSGFSEDLLP) and 621 to 673 (EMSS…DIGT). Composition is skewed to low complexity over residues 596-609 (SLPWSSRSSPSGFS) and 654-665 (SPSTSSNENSPP).

It localises to the nucleus. In terms of biological role, functions as a transcriptional activator playing a crucial role during development. Functions in gastrulation, regulating mesoderm differentiation. Activates wnt8, t/bra, chrd and mix-A/mix.1 expression. This is Eomesodermin (eomes) from Xenopus laevis (African clawed frog).